Reading from the N-terminus, the 1176-residue chain is Serine/threonine-protein kinase pakF (1176 aa).

Composition is skewed to low complexity over residues 1-19 and 32-52; these read MSNLKLSNNNNGNQKESSS and NLLNSFSSNNSNNNLSNSGSN. Disordered regions lie at residues 1–231 and 254–361; these read MSNL…HESR and LPST…KKTK. The span at 64–76 shows a compositional bias: pro residues; it reads QLPPNYTPPPPPH. The stretch at 92 to 133 forms a coiled coil; sequence LNNENSDNNNNNNNNNNNNNNNNNNNNNNNNNNNEQLARTES. Composition is skewed to low complexity over residues 93–125, 133–148, and 156–172; these read NNENSDNNNNNNNNNNNNNNNNNNNNNNNNNNN, SSVSIISSSSSGSNSG, and SSNISTDDSNTTTETYS. Over residues 173–197 the composition is skewed to polar residues; sequence MSPNQTLNSNIDSSEQQHQDLSSSV. The span at 198 to 226 shows a compositional bias: low complexity; the sequence is NNNNNNNNNNNNNNNNNNNNNNNNNNNNN. The segment covering 254–289 has biased composition (polar residues); that stretch reads LPSTPTQQNVEIQTTNGGSSETSPNGLISPRPSNDQ. Low complexity predominate over residues 316 to 353; that stretch reads SLSSSTTTPSTTSSLTSSPSSSSLAISSPNTTAATTTN. The CRIB domain maps to 370–383; that stretch reads ISVPYNVIHKMHVD. The 253-residue stretch at 394 to 646 folds into the Protein kinase domain; it reads FILDEKLGDG…PIDLLCHPFL (253 aa). ATP is bound by residues 400-408 and K423; that span reads LGDGAYGSV. D514 functions as the Proton acceptor in the catalytic mechanism. Disordered stretches follow at residues 670–723, 753–885, 968–1083, and 1112–1176; these read IDDL…SDEL, QEEE…GNNL, HTTS…TGRA, and NSNS…NIKK. 2 stretches are compositionally biased toward low complexity: residues 682-693 and 710-720; these read SQSSSSSSPQSP and SIISPIPSSPS. Acidic residues-rich tracts occupy residues 767–789 and 813–844; these read DEQDDEQDDEDDDDENEDDEDVD and DQDDEEEDEEEDDEEEEEEEEDDDEINEDEEI. Positions 812–873 form a coiled coil; the sequence is SDQDDEEEDE…NKKKNKKNNL (62 aa). Basic residues predominate over residues 852–870; the sequence is VRKKKNKSTKKSNKKKNKK. 2 stretches are compositionally biased toward polar residues: residues 873–884 and 968–985; these read LSTIGKSGSGNN and HTTSQPKQMQSKLSATNL. Composition is skewed to low complexity over residues 991 to 1044, 1051 to 1066, and 1148 to 1176; these read SSSP…RPNS, NNSSTTTTTNSNSSSS, and SSGSGSNSPSLSTNSSSTNSNNSVTNIKK.

The protein belongs to the protein kinase superfamily. STE Ser/Thr protein kinase family. STE20 subfamily. It depends on Mg(2+) as a cofactor.

The enzyme catalyses L-seryl-[protein] + ATP = O-phospho-L-seryl-[protein] + ADP + H(+). It carries out the reaction L-threonyl-[protein] + ATP = O-phospho-L-threonyl-[protein] + ADP + H(+). The chain is Serine/threonine-protein kinase pakF from Dictyostelium discoideum (Social amoeba).